The sequence spans 184 residues: ATP synthase subunit delta (184 aa).

The protein belongs to the ATPase delta chain family. In terms of assembly, F-type ATPases have 2 components, F(1) - the catalytic core - and F(0) - the membrane proton channel. F(1) has five subunits: alpha(3), beta(3), gamma(1), delta(1), epsilon(1). F(0) has three main subunits: a(1), b(2) and c(10-14). The alpha and beta chains form an alternating ring which encloses part of the gamma chain. F(1) is attached to F(0) by a central stalk formed by the gamma and epsilon chains, while a peripheral stalk is formed by the delta and b chains.

It localises to the cell membrane. In terms of biological role, f(1)F(0) ATP synthase produces ATP from ADP in the presence of a proton or sodium gradient. F-type ATPases consist of two structural domains, F(1) containing the extramembraneous catalytic core and F(0) containing the membrane proton channel, linked together by a central stalk and a peripheral stalk. During catalysis, ATP synthesis in the catalytic domain of F(1) is coupled via a rotary mechanism of the central stalk subunits to proton translocation. This protein is part of the stalk that links CF(0) to CF(1). It either transmits conformational changes from CF(0) to CF(1) or is implicated in proton conduction. The polypeptide is ATP synthase subunit delta (Bacillus licheniformis (strain ATCC 14580 / DSM 13 / JCM 2505 / CCUG 7422 / NBRC 12200 / NCIMB 9375 / NCTC 10341 / NRRL NRS-1264 / Gibson 46)).